We begin with the raw amino-acid sequence, 1272 residues long: MPEPAKKAVSAFTKKPKTTEVAAGSTAVFEAETEKTGIKVKWQRAGTEITDSEKYAIKAEGNKHSLTISNVGKDDEVTYAVIAGTSKVKFELKVKEPEKSEPVAPAEASPAPAASELPAPPVESNQNPEVPPAETQPEEPVDPIGLFVTRPQDGEVTVGGNITFTAKVAGESLLKKPSVKWFKGKWMDLASKVGKHLQLHDNYDRNNKVYTFEMEIIEANMTFAGGYRCEVSTKDKFDSSNFNLIVNEAPVSGEMDIRAAFRRTSLAGGGRRMTSAFLSTEGLEESGELNFSALLKKRDSFLRTANRGDGKSDSQPDVDVWEILRKAPPSEYEKIAFQYGITDLRGMLKRLKRIKKEEKKSTAFLKKLDPAYQVDKGQKIKLMVEVANPDADVKWLKNGQEIQVSGSKYIFEAIGNKRILTINHCSLADDAAYECVVAEEKSFTELFVKEPPILITHPLEDQMVMVGERVEFECEVSEEGATVKWEKDGVELTREETFKYRFKKDGKKQYLIINESTKEDSGHYTVKTNGGVSVAELIVQEKKLEVYQSIADLTVKARDQAVFKCEVSDENVKGIWLKNGKEVVPDERIKISHIGRIHKLTIEDVTPGDEADYSFIPQGFAYNLSAKLQFLEVKIDFVPREEPPKIHLDCLGQSPDTIVVVAGNKLRLDVPISGDPTPTVIWQKVNKKGELVHQSNEDSLTPSENSSDLSTDSKLLFESEGRVRVEKHEDHCVFIIEGAEKEDEGVYRVIVKNPVGEDKADITVKVIDVPDPPEAPKISNIGEDYCTVQWQPPTYDGGQPVLGYILERKKKKSYRWMRLNFDLLKELTYEAKRMIEGVVYEMRIYAVNSIGMSRPSPASQPFMPIAPPSEPTHFTVEDVSDTTVALKWRPPERIGAGGLDGYIVEYCKDGSAEWTPALPGLTERTSALIKDLVTGDKLYFRVKAINLAGESGAAIIKEPVTVQEIMQRPKICVPRHLRQTLVKKVGETINIMIPFQGKPRPKISWMKDGQTLDSKDVGIRNSSTDTILFIRKAELHHSGAYEVTLQIENMTDTVAITIQIIDKPGPPQNIKLADVWGFNVALEWTPPQDDGNAQILGYTVQKADKKTMEWYTVYDHYRRTNCVVSDLIMGNEYFFRVFSENLCGLSETAATTKNPAYIQKTGTTYKPPSYKEHDFSEPPKFTHPLVNRSVIAGYNTTLSCAVRGIPKPKIFWYKNKVDLSGDAKYRMFSKQGVLTLEIRKPTPLDGGFYTCKAVNERGEAEIECRLDVRVPQ.

Positions 95 to 147 are disordered; the sequence is KEPEKSEPVAPAEASPAPAASELPAPPVESNQNPEVPPAETQPEEPVDPIGLF. Over residues 102–117 the composition is skewed to low complexity; that stretch reads PVAPAEASPAPAASEL. Positions 137-252 constitute an Ig-like C2-type 1 domain; that stretch reads PEEPVDPIGL…NLIVNEAPVS (116 aa). Serine 265 carries the post-translational modification Phosphoserine; by PKA and PKC. At threonine 274 the chain carries Phosphothreonine; by PKA and PKC. The residue at position 300 (serine 300) is a Phosphoserine; by PKA. 4 Ig-like C2-type domains span residues 359–451, 452–542, 543–640, and 644–763; these read KKST…VKEP, PILI…VQEK, KLEV…FVPR, and PKIH…ADIT. 2 consecutive Fibronectin type-III domains span residues 772–868 and 870–965; these read PPEA…IAPP and EPTH…VQEI. Residues 969 to 1057 form the Ig-like C2-type 6 domain; sequence PKICVPRHLR…ENMTDTVAIT (89 aa). Residues 1066–1161 form the Fibronectin type-III 3 domain; that stretch reads PPQNIKLADV…TKNPAYIQKT (96 aa). Serine 1169 carries the post-translational modification Phosphoserine; by PKC. One can recognise an Ig-like C2-type 7 domain in the interval 1179 to 1263; it reads PKFTHPLVNR…VNERGEAEIE (85 aa).

The protein belongs to the immunoglobulin superfamily. MyBP family. In terms of processing, substrate for phosphorylation by PKA and PKC. Reversible phosphorylation appears to modulate contraction. As to expression, expressed specifically in cardiac muscle among adult tissues, but is also expressed transiently in the skeletal muscle at early developmental stages. Isoform Type I is found in embryonic skeletal muscle and isoform Type II is found in both embryonic skeletal and cardiac muscle.

Thick filament-associated protein located in the crossbridge region of vertebrate striated muscle A bands. In vitro it binds MHC, F-actin and native thin filaments, and modifies the activity of actin-activated myosin ATPase. It may modulate muscle contraction or may play a more structural role. May be involved in the early phase of myofibrillogenesis. This is Myosin-binding protein C, cardiac-type (MYBPC3) from Gallus gallus (Chicken).